The following is a 162-amino-acid chain: NADH-quinone oxidoreductase subunit I (162 aa).

2 consecutive 4Fe-4S ferredoxin-type domains span residues 52–82 (LRRY…IEAG) and 93–122 (VRYD…EGPN). The [4Fe-4S] cluster site is built by cysteine 62, cysteine 65, cysteine 68, cysteine 72, cysteine 102, cysteine 105, cysteine 108, and cysteine 112.

Belongs to the complex I 23 kDa subunit family. As to quaternary structure, NDH-1 is composed of 14 different subunits. Subunits NuoA, H, J, K, L, M, N constitute the membrane sector of the complex. Requires [4Fe-4S] cluster as cofactor.

The protein resides in the cell inner membrane. It catalyses the reaction a quinone + NADH + 5 H(+)(in) = a quinol + NAD(+) + 4 H(+)(out). Functionally, NDH-1 shuttles electrons from NADH, via FMN and iron-sulfur (Fe-S) centers, to quinones in the respiratory chain. The immediate electron acceptor for the enzyme in this species is believed to be ubiquinone. Couples the redox reaction to proton translocation (for every two electrons transferred, four hydrogen ions are translocated across the cytoplasmic membrane), and thus conserves the redox energy in a proton gradient. The chain is NADH-quinone oxidoreductase subunit I from Bradyrhizobium sp. (strain BTAi1 / ATCC BAA-1182).